Reading from the N-terminus, the 602-residue chain is MDTSSKENIQLFCKTSVQPVGRPSFKTEYPSSEEKQPCCGELKVFLGALSFVYFAKALAEGYLKSTITQIERRFDIPSSLVGVIDGSFEIGNLLVITFVSYFGAKLHRPKIIGAGCLIMGVGTLLIAMPQFFMEQYKYEIYSPSSNSTLSISPCLLESSSQLPVSVMEKSKSKISLLAAVPFWYLPKSLPRSQSREDSNSSSEKSKFIRDDHTDYQTPQGENVKIMEMARDFLPSLKYLFGNPVYFLYLCTSTVQFNSLFGMVTYKPKYIEQQYGQSSSRANFVIGLINIPAVALGIFSGGIAMKKFRISVCGAAKLYLGSSVFGYLLFLSLFALGCENSDVAGLTVSYQGTKPVSYHERALFSDCNPRCKCSETKWEPMCGENGITYVSACPAGCQTSNRSGKNIIFYNCTCVGIAASKSGNSSGIVGRCQKDNGCPQMFLYFLVISVITSYTLSLGGIPGYILLLRCIKPQLKSFALGIYTLSIRVLAGIPAPVYFGVLIDTSCLKWGFKRCGSRGSCRLYDSNVFRHIYLGLTVILGTVSIFLSIAVLFILKKNYVSKHRNFITKRERTMVSTRFQKENCTTSDHLLQPKYWPGKETQL.

Residues 1–43 lie on the Cytoplasmic side of the membrane; it reads MDTSSKENIQLFCKTSVQPVGRPSFKTEYPSSEEKQPCCGELK. The helical transmembrane segment at 44–63 threads the bilayer; the sequence is VFLGALSFVYFAKALAEGYL. The Extracellular portion of the chain corresponds to 64-82; it reads KSTITQIERRFDIPSSLVG. Residues 83 to 103 traverse the membrane as a helical segment; sequence VIDGSFEIGNLLVITFVSYFG. The Cytoplasmic portion of the chain corresponds to 104 to 109; the sequence is AKLHRP. The chain crosses the membrane as a helical span at residues 110 to 134; the sequence is KIIGAGCLIMGVGTLLIAMPQFFME. Topologically, residues 135 to 139 are extracellular; the sequence is QYKYE. A helical membrane pass occupies residues 140–156; it reads IYSPSSNSTLSISPCLL. Residues 157–238 lie on the Cytoplasmic side of the membrane; it reads ESSSQLPVSV…ARDFLPSLKY (82 aa). Positions 190 to 216 are disordered; the sequence is PRSQSREDSNSSSEKSKFIRDDHTDYQ. A compositionally biased stretch (basic and acidic residues) spans 193–214; the sequence is QSREDSNSSSEKSKFIRDDHTD. Residues 239–260 form a helical membrane-spanning segment; the sequence is LFGNPVYFLYLCTSTVQFNSLF. At 261 to 280 the chain is on the extracellular side; sequence GMVTYKPKYIEQQYGQSSSR. The helical transmembrane segment at 281–304 threads the bilayer; the sequence is ANFVIGLINIPAVALGIFSGGIAM. At 305 to 308 the chain is on the cytoplasmic side; sequence KKFR. The chain crosses the membrane as a helical span at residues 309–332; the sequence is ISVCGAAKLYLGSSVFGYLLFLSL. Over 333 to 444 the chain is Extracellular; sequence FALGCENSDV…NGCPQMFLYF (112 aa). A Kazal-like domain is found at 360–415; it reads RALFSDCNPRCKCSETKWEPMCGENGITYVSACPAGCQTSNRSGKNIIFYNCTCVG. Disulfide bonds link Cys-366–Cys-396, Cys-372–Cys-392, and Cys-381–Cys-413. N-linked (GlcNAc...) asparagine glycosylation is found at Asn-400, Asn-410, and Asn-423. The chain crosses the membrane as a helical span at residues 445–467; sequence LVISVITSYTLSLGGIPGYILLL. The Cytoplasmic portion of the chain corresponds to 468–476; the sequence is RCIKPQLKS. A helical membrane pass occupies residues 477–502; that stretch reads FALGIYTLSIRVLAGIPAPVYFGVLI. Over 503 to 536 the chain is Extracellular; sequence DTSCLKWGFKRCGSRGSCRLYDSNVFRHIYLGLT. The helical transmembrane segment at 537 to 554 threads the bilayer; sequence VILGTVSIFLSIAVLFIL. Residues 555–602 are Cytoplasmic-facing; that stretch reads KKNYVSKHRNFITKRERTMVSTRFQKENCTTSDHLLQPKYWPGKETQL.

This sequence belongs to the organo anion transporter (TC 2.A.60) family.

The protein localises to the cell membrane. The enzyme catalyses 3,3',5'-triiodo-L-thyronine(out) = 3,3',5'-triiodo-L-thyronine(in). It catalyses the reaction L-thyroxine(out) = L-thyroxine(in). The catalysed reaction is L-thyroxine sulfate(out) = L-thyroxine sulfate(in). Mediates the Na(+)-independent high affinity transport of organic anions such as the thyroid hormones L-thyroxine (T4), L-thyroxine sulfate (T4S), and 3,3',5'-triiodo-L-thyronine (reverse T3, rT3) at the plasma membrane. Regulates T4 levels in different brain regions by transporting T4, and also by serving as an export pump for T4S, which is a source of T4 after hydrolysis by local sulfatases. Increases the access of these substrates to the intracellular sites where they are metabolized by the deiodinases. Other potential substrates, such as triiodothyronine (T3), 17-beta-glucuronosyl estradiol (17beta-estradiol 17-O-(beta-D-glucuronate)), estrone-3-sulfate (E1S) and sulfobromophthalein (BSP) are transported with much lower efficiency. Transports T4 and E1S in a pH-insensitive manner. Facilitates the transport of thyroid hormones across the blood-brain barrier and into glia and neuronal cells in the brain. This is Solute carrier organic anion transporter family member 1C1 (SLCO1C1) from Macaca fascicularis (Crab-eating macaque).